A 171-amino-acid polypeptide reads, in one-letter code: Neuronal vesicle trafficking-associated protein 2 (171 aa).

The disordered stretch occupies residues 1 to 21 (MVKLNSNPGEKGAKPPSVEDG). Residues 1 to 71 (MVKLNSNPGE…FRVPKIAEFT (71 aa)) lie on the Cytoplasmic side of the membrane. A helical; Signal-anchor for type II membrane protein transmembrane segment spans residues 72 to 92 (VTILVSLALAFLACIVFLVVY). Topologically, residues 93–171 (KAFTYDHSCP…EPKPPKTQGH (79 aa)) are lumenal.

It belongs to the NSG family. Specifically expressed in neural and neuroendocrine tissues. Pituitary and less in adrenal gland and testis. Expressed in the hippocampus throughout development. Remains enriched in layer V cortical neurons during development. At P0, broadly expressed in the neocortex. Is down-regulated overall at P8 and P14, but remains relatively enriched in layer V. At P0 is lower expressed in the cerebellum. Expression remains low throughout development, and is undetectable by adulthood.

The protein localises to the membrane. The protein resides in the golgi apparatus. It localises to the trans-Golgi network membrane. Its subcellular location is the cell projection. It is found in the dendrite. The protein localises to the endosome membrane. The protein resides in the early endosome membrane. It localises to the late endosome membrane. Its subcellular location is the lysosome lumen. It is found in the cytoplasmic vesicle membrane. The protein localises to the golgi stack membrane. The protein resides in the endosome. It localises to the multivesicular body membrane. The protein is Neuronal vesicle trafficking-associated protein 2 of Mus musculus (Mouse).